Reading from the N-terminus, the 198-residue chain is Small ribosomal subunit protein uS4 (198 aa).

Positions 90–152 constitute an S4 RNA-binding domain; that stretch reads TRLDNLVLRA…SRSNELFKEN (63 aa).

The protein belongs to the universal ribosomal protein uS4 family. In terms of assembly, part of the 30S ribosomal subunit. Contacts protein S5. The interaction surface between S4 and S5 is involved in control of translational fidelity.

Functionally, one of the primary rRNA binding proteins, it binds directly to 16S rRNA where it nucleates assembly of the body of the 30S subunit. With S5 and S12 plays an important role in translational accuracy. The chain is Small ribosomal subunit protein uS4 from Finegoldia magna (strain ATCC 29328 / DSM 20472 / WAL 2508) (Peptostreptococcus magnus).